A 55-amino-acid chain; its full sequence is ATTGCSCPQCIIFDPICASSYKNGRRGFSSGCHMRCYNRCHGTDYFQISKGSKCI.

4 cysteine pairs are disulfide-bonded: C5-C40, C7-C36, C10-C32, and C17-C54.

As to quaternary structure, monomer. In terms of tissue distribution, stored in hemocyte granules and secreted into the hemolymph.

It localises to the secreted. In terms of biological role, has antibacterial activity against Gram-positive bacterium M.luteus. The protein is Locustin of Locusta migratoria (Migratory locust).